The following is a 269-amino-acid chain: 3-methyl-2-oxobutanoate hydroxymethyltransferase (269 aa).

The Mg(2+) site is built by aspartate 43 and aspartate 82. Residues 43–44, aspartate 82, and lysine 110 each bind 3-methyl-2-oxobutanoate; that span reads DS. Position 112 (glutamate 112) interacts with Mg(2+). Glutamate 179 acts as the Proton acceptor in catalysis.

It belongs to the PanB family. As to quaternary structure, homodecamer; pentamer of dimers. Requires Mg(2+) as cofactor.

The protein resides in the cytoplasm. The enzyme catalyses 3-methyl-2-oxobutanoate + (6R)-5,10-methylene-5,6,7,8-tetrahydrofolate + H2O = 2-dehydropantoate + (6S)-5,6,7,8-tetrahydrofolate. It functions in the pathway cofactor biosynthesis; (R)-pantothenate biosynthesis; (R)-pantoate from 3-methyl-2-oxobutanoate: step 1/2. Its function is as follows. Catalyzes the reversible reaction in which hydroxymethyl group from 5,10-methylenetetrahydrofolate is transferred onto alpha-ketoisovalerate to form ketopantoate. This chain is 3-methyl-2-oxobutanoate hydroxymethyltransferase, found in Acinetobacter baumannii (strain SDF).